The primary structure comprises 437 residues: Transmembrane protease serine 4 (437 aa).

Over 1 to 32 the chain is Cytoplasmic; that stretch reads MLQDPDSDQPLNSLDVKPLRKPRIPMETFRKV. The chain crosses the membrane as a helical; Signal-anchor for type II membrane protein span at residues 33 to 53; it reads GIPIIIALLSLASIIIVVVLI. The Extracellular segment spans residues 54–437; it reads KVILDKYYFL…WIYNVWKAEL (384 aa). The 33-residue stretch at 61 to 93 folds into the LDL-receptor class A domain; the sequence is YFLCGQPLHFIPRKQLCDGELDCPLGEDEEHCV. 8 disulfide bridges follow: cysteine 64–cysteine 83, cysteine 77–cysteine 92, cysteine 127–cysteine 183, cysteine 140–cysteine 193, cysteine 196–cysteine 310, cysteine 230–cysteine 246, cysteine 356–cysteine 372, and cysteine 383–cysteine 410. In terms of domain architecture, SRCR spans 94–204; that stretch reads KSFPEGPAVA…ACGKSLKTPR (111 aa). N-linked (GlcNAc...) asparagine glycans are attached at residues asparagine 130 and asparagine 178. One can recognise a Peptidase S1 domain in the interval 205-434; the sequence is VVGVEEASVD…YLNWIYNVWK (230 aa). Catalysis depends on charge relay system residues histidine 245 and aspartate 290. Serine 387 (charge relay system) is an active-site residue.

Belongs to the peptidase S1 family. Proteolytically processed; probably by an autocatalytic mechanism. In terms of tissue distribution, high levels in pancreatic, gastric, colorectal and ampullary cancer. Very weak expression in normal gastrointestinal and urogenital tract. Coexpressed with ACE2 within mature enterocytes.

The protein resides in the cell membrane. It is found in the secreted. Its function is as follows. Plasma membrane-anchored serine protease that directly induces processing of pro-uPA/PLAU into the active form through proteolytic activity. Seems to be capable of activating ENaC. Functionally, (Microbial infection) In gut epithelial cells, facilitates human coronavirus SARS-CoV-2 infection through, at least, the cleavage of coronavirus spike glycoproteins which activates the glycoprotein for host cell entry. This chain is Transmembrane protease serine 4, found in Homo sapiens (Human).